The following is a 449-amino-acid chain: MRSAAVLALLLCAGQVIALPVNSPMNKGDTEVMKCIVEVISDTLSKPSPMPVSKECFETLRGDERILSILRHQNLLKELQDLALQGAKERTHQQKKHSSYEDELSEVLEKPNDQAEPKEVTEEVSSKDAAEKRDDFKEVEKSDEDSDGDRPQASPGLGPGPKVEEDNQAPGEEEEAPSNAHPLASLPSPKYPGPQAKEDSEGPSQGPASREKGLSAEQGRQTEREEEEEKWEEAEAREKAVPEEESPPTAAFKPPPSLGNKETQRAAPGWPEDGAGKMGAEEAKPPEGKGEWAHSRQEEEEMARAPQVLFRGGKSGEPEQEEQLSKEWEDAKRWSKMDQLAKELTAEKRLEGEEEEEEDPDRSMRLSFRARGYGFRGPGLQLRRGWRPNSREDSVEAGLPLQVRGYPEEKKEEEGSANRRPEDQELESLSAIEAELEKVAHQLEELRRG.

The N-terminal stretch at Met1 to Ala18 is a signal peptide. Cys35 and Cys56 are joined by a disulfide. Residues Ala87 to Ala431 form a disordered region. Ser99 carries the phosphoserine modification. Over residues Val107–Glu140 the composition is skewed to basic and acidic residues. Ser142 bears the Phosphoserine mark. Ser185 is a glycosylation site (O-linked (GalNAc...) serine). Phosphotyrosine is present on Tyr191. The residue at position 200 (Ser200) is a Phosphoserine. Residue Ser204 is glycosylated (O-linked (GalNAc...) serine). A Phosphoserine modification is found at Ser215. Positions Glu233 to Pro242 are enriched in basic and acidic residues. Residue Thr249 is glycosylated (O-linked (GalNAc...) threonine). Positions Gly279–Gln297 are enriched in basic and acidic residues. Ser295 carries the phosphoserine modification. The residue at position 312 (Gly312) is a Glycine amide. A phosphoserine mark is found at Ser315, Ser325, and Ser363. Basic and acidic residues predominate over residues Gln323–Glu351. Residue Met364 is modified to Methionine sulfoxide. Phosphoserine is present on residues Ser390, Ser394, Ser416, and Ser430. A compositionally biased stretch (basic and acidic residues) spans Tyr406 to Asp423. A glycan (O-linked (Xyl...) (chondroitin sulfate) serine) is linked at Ser416.

The protein belongs to the chromogranin/secretogranin protein family. Self-interacts; self-assembly is promoted in vitro by chondroitin sulfate attachment which occurs at mildly acidic pH conditions. Interacts with SCG3. Interacts with ITPR1 in the secretory granules. In secretory granules, is attacked at both N- and C-terminal sides by proteolytic enzymes generating numerous peptides of various activities. Proteolytic processing can give rise to additional longer forms of catestatin peptides which display a less potent catecholamine release-inhibitory activity. In terms of processing, O-glycosylated; contains chondroitin sulfate (CS). CS attachment is pH-dependent, being observed at mildly acidic conditions of pH 5 but not at neutral pH, and promotes self-assembly in vitro. Highest concentration of GE-25 found in adrenal medulla with lower levels present in the pituitary, the intestinal mucosa and the pancreas. Also found in the brain.

It is found in the secreted. The protein localises to the cytoplasmic vesicle. It localises to the secretory vesicle. Its subcellular location is the neuronal dense core vesicle. Its function is as follows. Strongly inhibits glucose induced insulin release from the pancreas. Functionally, completely inhibits catecholamine release from chromaffin cells. In terms of biological role, has antibacterial activity against M.luteus. Not active against E.coli. Inhibits catecholamine release from chromaffin cells and noradrenergic neurons by acting as a non-competitive nicotinic cholinergic antagonist. Displays antibacterial activity against Gram-positive bacteria M.luteus and B.megaterium, and Gram-negative bacteria E.coli, and antifungal activity against a variety of filamentous fungi including A.fumigatus, N.hematococca, F.culmorum, F.oxyporum, T.mentagrophytes and several forms of Candida: C.albicans, C.tropicalis, C.glabrata and C.neoform. Can induce mast cell migration, degranulation and production of cytokines and chemokines. Its function is as follows. Has antibacterial activity against Gram-positive bacteria M.luteus, B.megaterium. Not active against Gram-positive bacteria B.cereus, B.subtilis, S.pyogenes, M.fortuitum, S.aureus and L.monocytogenes and against Gram-negative bacteria E.coli, E.cloacae, S.typhimurium, K.pneumoniae and P.aeruginosa. Possesses antifungal activity against N.crassa, A.fumigatus, A.brassicicola, N.hematococca, F.culmorum and F.oxyporum and against the yeast S.cerevisiae and C.albicans. Inactive against A.benhamiae. Functionally, has antifungal activity against N.crassa, A.fumigatus, A.brassicicola, N.hematococca, F.culmorum, F.oxyporum, A.benhamiae, C.neoformans, as well as against yeasts C.albicans, and C.tropicalis. Seems to be inactive against C.glabrata. Interacts with the fungal cell wall, crosses the plasma membrane and accumulates in fungal cells where it inhibits calcineurin activity. In terms of biological role, regulates granule biogenesis in endocrine cells by up-regulating the transcription of protease nexin 1 (SERPINE2) via a cAMP-PKA-SP1 pathway. This leads to inhibition of granule protein degradation in the Golgi complex which in turn promotes granule formation. The chain is Chromogranin-A (CHGA) from Bos taurus (Bovine).